A 93-amino-acid chain; its full sequence is Microcin N immunity protein (93 aa).

3 consecutive transmembrane segments (helical) span residues 3 to 23, 36 to 56, and 68 to 88; these read FLNFAFSPVFFSIMACYFIVW, LSIIIISFLICFIYPWLNYKI, and LFCFLSSLVAVVINLIVYFIL.

It belongs to the MceB microcin immunity protein family.

Its subcellular location is the cell inner membrane. In terms of biological role, probably able to protect the producing cell against microcin N (microcin 24). In Escherichia coli, this protein is Microcin N immunity protein.